Consider the following 336-residue polypeptide: 3-isopropylmalate dehydrogenase (336 aa).

Substrate is bound by residues arginine 87, arginine 97, arginine 121, and aspartate 211. Aspartate 211, aspartate 235, and aspartate 239 together coordinate Mg(2+). Residue glycine 271–aspartate 283 participates in NAD(+) binding.

Belongs to the isocitrate and isopropylmalate dehydrogenases family. LeuB type 2 subfamily. Homodimer. Requires Mg(2+) as cofactor. It depends on Mn(2+) as a cofactor.

The protein localises to the cytoplasm. The catalysed reaction is (2R,3S)-3-isopropylmalate + NAD(+) = 4-methyl-2-oxopentanoate + CO2 + NADH. It participates in amino-acid biosynthesis; L-leucine biosynthesis; L-leucine from 3-methyl-2-oxobutanoate: step 3/4. Functionally, catalyzes the oxidation of 3-carboxy-2-hydroxy-4-methylpentanoate (3-isopropylmalate) to 3-carboxy-4-methyl-2-oxopentanoate. The product decarboxylates to 4-methyl-2 oxopentanoate. The polypeptide is 3-isopropylmalate dehydrogenase (Mycobacterium leprae (strain Br4923)).